The chain runs to 995 residues: UPF0182 protein MMAR_1371 (995 aa).

7 helical membrane-spanning segments follow: residues 18–38, 63–83, 113–133, 175–195, 210–230, 259–279, and 287–307; these read VLIL…RLID, FLVF…GLAL, LFGI…AQSY, FVAI…FGGI, IQLV…YWLD, KLIL…AIVL, and IGLV…PMIV. The interval 900 to 948 is disordered; the sequence is AATGIQPTEGGAPANVPPNNAPSPEALPGTPPSPPTAVPPAPEASVTLS. A compositionally biased stretch (pro residues) spans 928–941; it reads GTPPSPPTAVPPAP.

The protein belongs to the UPF0182 family.

The protein localises to the cell membrane. This Mycobacterium marinum (strain ATCC BAA-535 / M) protein is UPF0182 protein MMAR_1371.